We begin with the raw amino-acid sequence, 488 residues long: Capsid protein (488 aa).

Positions 80 to 93 are enriched in acidic residues; sequence ISEDESDSGEEPEF. A disordered region spans residues 80-143; that stretch reads ISEDESDSGE…QPKTIPGQKQ (64 aa). Positions 94 to 109 are enriched in basic and acidic residues; sequence EQVRMDRTGGTEIPKE. Positions 121 to 124 match the Nuclear localization signal motif; that stretch reads RKRK. Polar residues predominate over residues 134–143; sequence QPKTIPGQKQ. The CCHC-type zinc finger occupies 410 to 427; the sequence is CRCWICNIEGHYANECPN. A disordered region spans residues 463–488; it reads YKEEEEETSTEESDDESSTSEDSDSD. The segment covering 464–488 has biased composition (acidic residues); that stretch reads KEEEEETSTEESDDESSTSEDSDSD.

Belongs to the caulimoviridae capsid protein family. Interacts (via nuclear localization signal) with host importin alpha.

The protein localises to the virion. Its subcellular location is the host nucleus. In terms of biological role, self assembles to form an icosahedral capsid, about 50 nm in diameter, nm, composed of 420 subunits of the viral capsid protein. The capsid encapsulates the genomic dsDNA. Following virus entry into host cell, provides nuclear import of the viral genome. Virus particles do not enter the nucleus, but dock at the nuclear membrane through the interaction with host importins. This is Capsid protein from Arabidopsis thaliana (Mouse-ear cress).